We begin with the raw amino-acid sequence, 483 residues long: UDP-N-acetylmuramoyl-L-alanyl-D-glutamate--2,6-diaminopimelate ligase (483 aa).

A UDP-N-acetyl-alpha-D-muramoyl-L-alanyl-D-glutamate-binding site is contributed by Ser30. An ATP-binding site is contributed by 109 to 115 (GTNGKTT). Residues 151–152 (TT), Ser178, and Arg186 contribute to the UDP-N-acetyl-alpha-D-muramoyl-L-alanyl-D-glutamate site. At Lys218 the chain carries N6-carboxylysine. Residues Arg380, 403 to 406 (DNPR), Gly453, and Glu457 each bind meso-2,6-diaminopimelate. Positions 403 to 406 (DNPR) match the Meso-diaminopimelate recognition motif motif.

The protein belongs to the MurCDEF family. MurE subfamily. Mg(2+) is required as a cofactor. In terms of processing, carboxylation is probably crucial for Mg(2+) binding and, consequently, for the gamma-phosphate positioning of ATP.

Its subcellular location is the cytoplasm. The enzyme catalyses UDP-N-acetyl-alpha-D-muramoyl-L-alanyl-D-glutamate + meso-2,6-diaminopimelate + ATP = UDP-N-acetyl-alpha-D-muramoyl-L-alanyl-gamma-D-glutamyl-meso-2,6-diaminopimelate + ADP + phosphate + H(+). It participates in cell wall biogenesis; peptidoglycan biosynthesis. In terms of biological role, catalyzes the addition of meso-diaminopimelic acid to the nucleotide precursor UDP-N-acetylmuramoyl-L-alanyl-D-glutamate (UMAG) in the biosynthesis of bacterial cell-wall peptidoglycan. The chain is UDP-N-acetylmuramoyl-L-alanyl-D-glutamate--2,6-diaminopimelate ligase from Chlamydia abortus (strain DSM 27085 / S26/3) (Chlamydophila abortus).